The following is a 555-amino-acid chain: Carboxypeptidase Y homolog A (555 aa).

The N-terminal stretch at 1 to 17 is a signal peptide; sequence MRGLATTLLIGAAAAAT. Positions 18–136 are excised as a propeptide; it reads YPAQQVLKAP…RLETFDLRVK (119 aa). Intrachain disulfides connect Cys-191–Cys-430, Cys-325–Cys-339, Cys-349–Cys-372, Cys-356–Cys-365, and Cys-394–Cys-400. Asn-222 carries N-linked (GlcNAc...) asparagine glycosylation. Residue Ser-278 is part of the active site. Asp-469 is an active-site residue. The N-linked (GlcNAc...) asparagine glycan is linked to Asn-520. His-531 is an active-site residue.

Belongs to the peptidase S10 family.

The protein resides in the vacuole. It carries out the reaction Release of a C-terminal amino acid with broad specificity.. Functionally, vacuolar carboxypeptidase involved in degradation of small peptides. Digests preferentially peptides containing an aliphatic or hydrophobic residue in P1' position, as well as methionine, leucine or phenylalanine in P1 position of ester substrate. This Talaromyces marneffei (strain ATCC 18224 / CBS 334.59 / QM 7333) (Penicillium marneffei) protein is Carboxypeptidase Y homolog A (cpyA).